Reading from the N-terminus, the 444-residue chain is Phosphoribosylamine--glycine ligase (444 aa).

Residues 109 to 324 enclose the ATP-grasp domain; that stretch reads RNLFKKYEID…FLDVCFAIAE (216 aa). 140–202 contacts ATP; sequence MTSLGKDVVV…EEKLVGVEFT (63 aa). Mg(2+) contacts are provided by glutamine 282, glutamate 294, and asparagine 296. Positions 282, 294, and 296 each coordinate Mn(2+).

It belongs to the GARS family. Mg(2+) is required as a cofactor. Mn(2+) serves as cofactor.

It catalyses the reaction 5-phospho-beta-D-ribosylamine + glycine + ATP = N(1)-(5-phospho-beta-D-ribosyl)glycinamide + ADP + phosphate + H(+). The protein operates within purine metabolism; IMP biosynthesis via de novo pathway; N(1)-(5-phospho-D-ribosyl)glycinamide from 5-phospho-alpha-D-ribose 1-diphosphate: step 2/2. This Methanococcus maripaludis (strain C5 / ATCC BAA-1333) protein is Phosphoribosylamine--glycine ligase.